The chain runs to 91 residues: MEKGECILYPCYFNAALSRAEGRRVPRNIAAKGPNANDVERALRRLGIACQAEEHHHPAHWARHEGRIIATYTGKKEALIKKVARAIEVRK.

This sequence belongs to the SRP19 family. Part of the signal recognition particle protein translocation system, which is composed of SRP and FtsY. Archaeal SRP consists of a 7S RNA molecule of 300 nucleotides and two protein subunits: SRP54 and SRP19.

It localises to the cytoplasm. Involved in targeting and insertion of nascent membrane proteins into the cytoplasmic membrane. Binds directly to 7S RNA and mediates binding of the 54 kDa subunit of the SRP. The polypeptide is Signal recognition particle 19 kDa protein (Methanoregula boonei (strain DSM 21154 / JCM 14090 / 6A8)).